We begin with the raw amino-acid sequence, 201 residues long: Ribosome maturation factor RimM (201 aa).

Residues 94–168 (EDEYYHADLI…RLVADPPLGL (75 aa)) form the PRC barrel domain. The disordered stretch occupies residues 164–201 (PPLGLLDDTRPPAGVEGEVEEDPGVGIDEDGDGKGGAS). Over residues 180–194 (GEVEEDPGVGIDEDG) the composition is skewed to acidic residues.

This sequence belongs to the RimM family. Binds ribosomal protein uS19.

It localises to the cytoplasm. Its function is as follows. An accessory protein needed during the final step in the assembly of 30S ribosomal subunit, possibly for assembly of the head region. Essential for efficient processing of 16S rRNA. May be needed both before and after RbfA during the maturation of 16S rRNA. It has affinity for free ribosomal 30S subunits but not for 70S ribosomes. The protein is Ribosome maturation factor RimM of Rhodospirillum rubrum (strain ATCC 11170 / ATH 1.1.1 / DSM 467 / LMG 4362 / NCIMB 8255 / S1).